Here is a 210-residue protein sequence, read N- to C-terminus: Superoxide dismutase [Mn], mitochondrial (210 aa).

4 residues coordinate Mn(2+): histidine 29, histidine 77, aspartate 163, and histidine 167.

The protein belongs to the iron/manganese superoxide dismutase family. As to quaternary structure, homotetramer. The cofactor is Mn(2+).

Its subcellular location is the mitochondrion matrix. The catalysed reaction is 2 superoxide + 2 H(+) = H2O2 + O2. Its function is as follows. Destroys superoxide anion radicals which are normally produced within the cells and which are toxic to biological systems. The protein is Superoxide dismutase [Mn], mitochondrial (sodB) of Aspergillus fumigatus (strain ATCC MYA-4609 / CBS 101355 / FGSC A1100 / Af293) (Neosartorya fumigata).